The sequence spans 345 residues: tRNA N6-adenosine threonylcarbamoyltransferase (345 aa).

His-111 and His-115 together coordinate Fe cation. Residues Leu-134–Gly-138, Asp-167, Gly-180, and Asn-276 contribute to the substrate site. Residue Asp-304 coordinates Fe cation.

It belongs to the KAE1 / TsaD family. Fe(2+) serves as cofactor.

Its subcellular location is the cytoplasm. It carries out the reaction L-threonylcarbamoyladenylate + adenosine(37) in tRNA = N(6)-L-threonylcarbamoyladenosine(37) in tRNA + AMP + H(+). Required for the formation of a threonylcarbamoyl group on adenosine at position 37 (t(6)A37) in tRNAs that read codons beginning with adenine. Is involved in the transfer of the threonylcarbamoyl moiety of threonylcarbamoyl-AMP (TC-AMP) to the N6 group of A37, together with TsaE and TsaB. TsaD likely plays a direct catalytic role in this reaction. This chain is tRNA N6-adenosine threonylcarbamoyltransferase, found in Alcanivorax borkumensis (strain ATCC 700651 / DSM 11573 / NCIMB 13689 / SK2).